We begin with the raw amino-acid sequence, 758 residues long: Vitamin K-dependent gamma-carboxylase (758 aa).

The disordered stretch occupies residues 1–21 (MAVSARSARTSPGSDKVQKDK). Position 2 is an N-acetylalanine (A2). The Cytoplasmic portion of the chain corresponds to 2–60 (AVSARSARTSPGSDKVQKDKAELISGPRQDSLMGKLLGFEWTDLSSWRRLVTLLNRPTD). A helical membrane pass occupies residues 61-81 (PASLAVFRFLFGFLMVLDIPQ). The Lumenal segment spans residues 82-113 (ERGLSSLDRKYLDGLDVCRFPLLDALRPLPLD). C99 and C450 are joined by a disulfide. Residues 114-134 (WMYLVYTIMFLGALGMMLGLC) form a helical membrane-spanning segment. Residues 135–136 (YR) lie on the Cytoplasmic side of the membrane. The chain crosses the membrane as a helical span at residues 137–157 (ISCVLFLLPYWYVFLLDKTSW). Over 158–292 (NNHSYLYGLL…VSYFHCMNSQ (135 aa)) the chain is Lumenal. A helical transmembrane segment spans residues 293–313 (LFSIGMFSYVMLASSPLFCSP). Over 314–361 (EWPRKLVSYCPQRLQELLPLKAAPQPSVSCVYKRSRGKSGQKPGLRHQ) the chain is Cytoplasmic. The helical transmembrane segment at 362-382 (LGAAFTLLYLLEQLFLPYSHF) threads the bilayer. Topologically, residues 383 to 758 (LTQGYNNWTN…SNPDPVHSEF (376 aa)) are lumenal. A disordered region spans residues 732-758 (GELSPSNMDSSHSNPPESNPDPVHSEF). Positions 735–747 (SPSNMDSSHSNPP) are enriched in polar residues.

The protein belongs to the vitamin K-dependent gamma-carboxylase family. In terms of assembly, monomer. May interact with CALU.

It localises to the endoplasmic reticulum membrane. The enzyme catalyses 4-carboxy-L-glutamyl-[protein] + 2,3-epoxyphylloquinone + H2O + H(+) = phylloquinol + L-glutamyl-[protein] + CO2 + O2. Its function is as follows. Mediates the vitamin K-dependent carboxylation of glutamate residues to calcium-binding gamma-carboxyglutamate (Gla) residues with the concomitant conversion of the reduced hydroquinone form of vitamin K to vitamin K epoxide. Catalyzes gamma-carboxylation of various proteins, such as blood coagulation factors (F2, F7, F9 and F10), osteocalcin (BGLAP) or matrix Gla protein (MGP). This chain is Vitamin K-dependent gamma-carboxylase (GGCX), found in Pongo abelii (Sumatran orangutan).